Here is a 504-residue protein sequence, read N- to C-terminus: 2-isopropylmalate synthase (504 aa).

The 262-residue stretch at 6-267 (IIIFDTTLRD…YTGIISKEIY (262 aa)) folds into the Pyruvate carboxyltransferase domain. Residues Asp15, His201, His203, and Asn237 each contribute to the Mn(2+) site. The interval 391 to 504 (EITDLLQSSG…LNSYLRIHKN (114 aa)) is regulatory domain.

It belongs to the alpha-IPM synthase/homocitrate synthase family. LeuA type 1 subfamily. Homodimer. Requires Mn(2+) as cofactor.

The protein resides in the cytoplasm. It carries out the reaction 3-methyl-2-oxobutanoate + acetyl-CoA + H2O = (2S)-2-isopropylmalate + CoA + H(+). The protein operates within amino-acid biosynthesis; L-leucine biosynthesis; L-leucine from 3-methyl-2-oxobutanoate: step 1/4. Catalyzes the condensation of the acetyl group of acetyl-CoA with 3-methyl-2-oxobutanoate (2-ketoisovalerate) to form 3-carboxy-3-hydroxy-4-methylpentanoate (2-isopropylmalate). The polypeptide is 2-isopropylmalate synthase (Campylobacter concisus (strain 13826)).